The chain runs to 318 residues: Cephalosporin-C deacetylase (318 aa).

A substrate-binding site is contributed by tyrosine 91. Serine 181 acts as the Nucleophile in catalysis. Residues aspartate 269 and histidine 298 each act as charge relay system in the active site.

The protein belongs to the carbohydrate esterase 7 family. As to quaternary structure, homohexamer.

Its subcellular location is the cytoplasm. The catalysed reaction is Deacetylation of xylans and xylo-oligosaccharides.. The enzyme catalyses cephalosporin C + H2O = deacetylcephalosporin C + acetate + H(+). Esterase that removed acetyl groups from a number of O-acetylated small substrates, such as acetylated xylose, short xylooligosaccharides and cephalosporin C. Has no activity towards polymeric acetylated xylan. Cannot cleave amide linkages. The protein is Cephalosporin-C deacetylase (cah) of Bacillus subtilis (strain 168).